We begin with the raw amino-acid sequence, 181 residues long: ATP-dependent protease subunit ClpQ (181 aa).

Ser-2 is an active-site residue. Na(+) contacts are provided by Gly-165, Cys-168, and Thr-171.

As to quaternary structure, a double ring-shaped homohexamer of ClpQ is capped on each side by a ring-shaped ClpY homohexamer. The assembly of the ClpQ/ClpY complex is dependent on binding of ATP.

It localises to the cytoplasm. Its function is as follows. Protease subunit of a proteasome-like degradation complex. The sequence is that of ATP-dependent protease subunit ClpQ (clpQ) from Bacillus subtilis (strain 168).